A 535-amino-acid polypeptide reads, in one-letter code: Cytochrome P450 monooxygenase BOA7 (535 aa).

The chain crosses the membrane as a helical span at residues 20 to 37; sequence SIFLILGFFVLAAILIAW. Residues Asn-65, Asn-148, Asn-180, and Asn-420 are each glycosylated (N-linked (GlcNAc...) asparagine). Cys-478 is a binding site for heme.

This sequence belongs to the cytochrome P450 family. Heme is required as a cofactor.

It is found in the membrane. It functions in the pathway polyketide biosynthesis. Cytochrome P450 monooxygenase; part of the gene cluster B that mediates the biosynthesis of botcinic acid and its botcinin derivatives, acetate-derived polyketides that contribute to virulence when combined with the sesquiterpene botrydial. Botcinic acid and its derivatives have been shown to induce chlorosis and necrosis during host plant infection, but also have antifungal activities. Two polyketide synthases, BOA6 and BOA9, are involved in the biosynthesis of botcinins. BOA6 mediates the formation of the per-methylated tetraketide core by condensation of four units of malonyl-CoA with one unit of acetyl-CoA, which would be methylated in activated methylene groups to yield a bicyclic acid intermediate that could then either be converted to botrylactone derivatives or lose the starter acetate unit through a retro-Claisen type C-C bond cleavage to yield botcinin derivatives. The second polyketide synthase, BOA9, is probably required for the biosynthesis of the tetraketide side chain of botcinins. The methyltransferase (MT) domain within BOA6 is probably responsible for the incorporation of four methyl groups. The trans-enoyl reductase BOA5 might take over the enoyl reductase function of BOA6 that misses an ER domain. The monooxygenases BOA2, BOA3 and BOA4 might be involved in further hydroxylations at C4, C5 and C8, whereas BOA7, close to BOA9, could potentially be involved in the hydroxylation at C4 in the side chain of botcinins. This is Cytochrome P450 monooxygenase BOA7 from Botryotinia fuckeliana (strain B05.10) (Noble rot fungus).